The chain runs to 645 residues: Transcription termination factor FttA (645 aa).

Residues A10–R77 are KHa. The KHb stretch occupies residues K78–T146. Residues E187–K391 form a metallo-beta-lactamase N-terminus region. Zn(2+) is bound by residues H250, H252, D254, H255, H337, and D360. The interval E392–S586 is beta-Casp. Residues G587–F645 form a metallo-beta-lactamase C-terminus region. Residue H612 participates in Zn(2+) binding.

The protein belongs to the metallo-beta-lactamase superfamily. RNA-metabolizing metallo-beta-lactamase-like family. FttA subfamily. As to quaternary structure, homodimer. Interacts with RNA polymerase (RNAP), interacts with the Spt4-Spt5 complex. Requires Zn(2+) as cofactor.

Its function is as follows. Terminates transcription on the whole genome. Termination is linked to FttA-mediated RNA cleavage and does not require NTP hydrolysis. Cleaves endonucleolytically at the RNA exit channel of RNA polymerase (RNAP); the 5'-3' exonuclease activity of this protein degrades the nascent RNA released from RNAP. Terminates transcription genome-wide in M.maripaludis. Restores wild-type growth to a strain of Methanococcus maripaludis depleted for this gene at 22 degrees Celsius and prevents transcriptional read-through. Transcription termination is most effective in vivo on RNAs with more than one U4-tract in their 3'-ends. Has endonuclease activity after U-rich tracts in transcription termination sequences. This is Transcription termination factor FttA from Cenarchaeum symbiosum (strain A).